We begin with the raw amino-acid sequence, 242 residues long: High mobility group protein homolog (242 aa).

2 consecutive DNA-binding regions (HMG box) follow at residues P54–K122 and K126–E197.

Its subcellular location is the host nucleus. The sequence is that of High mobility group protein homolog (EF1) from Acheta domesticus (House cricket).